Reading from the N-terminus, the 492-residue chain is Glutamyl-tRNA(Gln) amidotransferase subunit A (492 aa).

Catalysis depends on charge relay system residues Lys-78 and Ser-158. The Acyl-ester intermediate role is filled by Ser-182.

This sequence belongs to the amidase family. GatA subfamily. In terms of assembly, heterotrimer of A, B and C subunits.

It carries out the reaction L-glutamyl-tRNA(Gln) + L-glutamine + ATP + H2O = L-glutaminyl-tRNA(Gln) + L-glutamate + ADP + phosphate + H(+). Functionally, allows the formation of correctly charged Gln-tRNA(Gln) through the transamidation of misacylated Glu-tRNA(Gln) in organisms which lack glutaminyl-tRNA synthetase. The reaction takes place in the presence of glutamine and ATP through an activated gamma-phospho-Glu-tRNA(Gln). In Rickettsia akari (strain Hartford), this protein is Glutamyl-tRNA(Gln) amidotransferase subunit A.